Here is an 850-residue protein sequence, read N- to C-terminus: Pentatricopeptide repeat-containing protein At5g16860 (850 aa).

PPR repeat units follow at residues 58–88 (TLNL…FPPS), 91–125 (GVYH…SWTP), 126–160 (DNYT…GFIS), 161–191 (NVFV…MSVW), 192–227 (DVVS…GCRP), 228–262 (DNIT…EMIQ), 263–293 (NMFV…MSVK), 294–328 (DVVS…KIKM), 329–363 (DVVT…GIKP), 364–398 (NEVT…PIDL), 406–436 (ENMV…LSPK), 439–473 (DVVT…DCQT), 476–510 (NAFT…QQNA), 512–542 (PLFV…MMAK), 543–577 (NEVT…GFKL), 578–608 (DGVT…MKTV), and 614–644 (GPEH…MPME). The segment at 649–724 (VWVAFLSCCR…RPGCSWVEGI (76 aa)) is type E motif. The segment at 725-755 (KGTTTFFVGDKTHPHAKEIYQVLLDHMQRIK) is type E(+) motif. Residues 756-850 (DIGYVPETGF…NGSCSCKGYW (95 aa)) are type DYW motif.

The protein belongs to the PPR family. PCMP-H subfamily.

The sequence is that of Pentatricopeptide repeat-containing protein At5g16860 (PCMP-H92) from Arabidopsis thaliana (Mouse-ear cress).